The primary structure comprises 220 residues: Probable chemoreceptor glutamine deamidase CheD 2 (220 aa).

It belongs to the CheD family.

It catalyses the reaction L-glutaminyl-[protein] + H2O = L-glutamyl-[protein] + NH4(+). Functionally, probably deamidates glutamine residues to glutamate on methyl-accepting chemotaxis receptors (MCPs), playing an important role in chemotaxis. The protein is Probable chemoreceptor glutamine deamidase CheD 2 of Methanosarcina acetivorans (strain ATCC 35395 / DSM 2834 / JCM 12185 / C2A).